A 396-amino-acid chain; its full sequence is Putative arsenical pump-driving ATPase 1 (396 aa).

Position 8-15 (8-15 (GKGGVGKT)) interacts with ATP.

This sequence belongs to the arsA ATPase family.

The catalysed reaction is arsenite(in) + ATP + H2O = arsenite(out) + ADP + phosphate + H(+). Its function is as follows. Anion-transporting ATPase. Catalyzes the extrusion of arsenite. In Aquifex aeolicus (strain VF5), this protein is Putative arsenical pump-driving ATPase 1 (arsA1).